We begin with the raw amino-acid sequence, 295 residues long: Tyrosine recombinase XerD (295 aa).

The Core-binding (CB) domain maps to 1–85 (METIIEEYLK…TIRSFHQFAL (85 aa)). The Tyr recombinase domain occupies 106–289 (KLPDVLDVEE…SKTQIRQMYN (184 aa)). Active-site residues include Arg146, Lys170, His241, Arg244, and His267. Tyr276 functions as the O-(3'-phospho-DNA)-tyrosine intermediate in the catalytic mechanism.

This sequence belongs to the 'phage' integrase family. XerD subfamily. In terms of assembly, forms a cyclic heterotetrameric complex composed of two molecules of XerC and two molecules of XerD.

The protein localises to the cytoplasm. In terms of biological role, site-specific tyrosine recombinase, which acts by catalyzing the cutting and rejoining of the recombining DNA molecules. The XerC-XerD complex is essential to convert dimers of the bacterial chromosome into monomers to permit their segregation at cell division. It also contributes to the segregational stability of plasmids. The polypeptide is Tyrosine recombinase XerD (Staphylococcus haemolyticus (strain JCSC1435)).